The sequence spans 488 residues: Cytochrome P450 family 716 subfamily AD polypeptide 2 (488 aa).

The helical transmembrane segment at 5–25 (LLLLSTLLILTLCCHFFYLFI) threads the bilayer. C433 lines the heme pocket.

It belongs to the cytochrome P450 family. The cofactor is heme. Expressed in maturing fruits and in juice vesicles.

The protein localises to the membrane. The catalysed reaction is (1R,2R,3S,8R,10R,11R,15S,16S)-3-(acetyloxy)-15-[(4R)-4-[(2S)-3,3-dimethyloxiran-2-yl]-1,4-dihydroxybutan-2-yl]-2,7,7,11,16-pentamethyl-5-oxo-6-oxatetracyclo[9.7.0.0(2,8).0(12,16)]octadec-12-en-10-yl acetate + reduced [NADPH--hemoprotein reductase] + O2 = (1R,2R,3S,8R,10R,11R,15S,16S)-3-(acetyloxy)-15-(1-hydroxy-4-oxobutan-2-yl)-2,7,7,11,16-pentamethyl-5-oxo-6-oxatetracyclo[9.7.0.0(2,8).0(12,16)]octadec-12-en-10-yl acetate + 2-methylpropanoate + oxidized [NADPH--hemoprotein reductase] + H2O + 2 H(+). It participates in secondary metabolite biosynthesis; terpenoid biosynthesis. In terms of biological role, monooxygenase involved in the biosynthesis of limonoids triterpene natural products such as limonin, a compound with insecticidal activity responsible for the bitter taste in citrus. Catalyzes the formation of (1R,2R,3S,8R,10R,11R,15S,16S)-3-(acetyloxy)-15-(1-hydroxy-4-oxobutan-2-yl)-2,7,7,11,16-pentamethyl-5-oxo-6-oxatetracyclo[9.7.0.0(2,8).0(12,16)]octadec-12-en-10-yl acetate. The chain is Cytochrome P450 family 716 subfamily AD polypeptide 2 from Citrus sinensis (Sweet orange).